A 357-amino-acid polypeptide reads, in one-letter code: Histidinol-phosphate aminotransferase 1 (357 aa).

Position 217 is an N6-(pyridoxal phosphate)lysine (Lys-217).

It belongs to the class-II pyridoxal-phosphate-dependent aminotransferase family. Histidinol-phosphate aminotransferase subfamily. In terms of assembly, homodimer. Requires pyridoxal 5'-phosphate as cofactor.

It carries out the reaction L-histidinol phosphate + 2-oxoglutarate = 3-(imidazol-4-yl)-2-oxopropyl phosphate + L-glutamate. Its pathway is amino-acid biosynthesis; L-histidine biosynthesis; L-histidine from 5-phospho-alpha-D-ribose 1-diphosphate: step 7/9. This is Histidinol-phosphate aminotransferase 1 from Burkholderia lata (strain ATCC 17760 / DSM 23089 / LMG 22485 / NCIMB 9086 / R18194 / 383).